The sequence spans 216 residues: Enolase-phosphatase E1 (216 aa).

Positions 8 and 10 each coordinate Mg(2+). Substrate contacts are provided by residues 115 to 116 (SS) and K149. Residue D172 participates in Mg(2+) binding.

This sequence belongs to the HAD-like hydrolase superfamily. MasA/MtnC family. In terms of assembly, monomer. Requires Mg(2+) as cofactor.

It is found in the cytoplasm. The protein resides in the nucleus. The catalysed reaction is 5-methylsulfanyl-2,3-dioxopentyl phosphate + H2O = 1,2-dihydroxy-5-(methylsulfanyl)pent-1-en-3-one + phosphate. It participates in amino-acid biosynthesis; L-methionine biosynthesis via salvage pathway; L-methionine from S-methyl-5-thio-alpha-D-ribose 1-phosphate: step 3/6. Its pathway is amino-acid biosynthesis; L-methionine biosynthesis via salvage pathway; L-methionine from S-methyl-5-thio-alpha-D-ribose 1-phosphate: step 4/6. In terms of biological role, bifunctional enzyme that catalyzes the enolization of 2,3-diketo-5-methylthiopentyl-1-phosphate (DK-MTP-1-P) into the intermediate 2-hydroxy-3-keto-5-methylthiopentenyl-1-phosphate (HK-MTPenyl-1-P), which is then dephosphorylated to form the acireductone 1,2-dihydroxy-3-keto-5-methylthiopentene (DHK-MTPene). The chain is Enolase-phosphatase E1 (utr4) from Schizosaccharomyces pombe (strain 972 / ATCC 24843) (Fission yeast).